The following is a 116-amino-acid chain: Venom protein 54.1 (116 aa).

A signal peptide spans 1–19; it reads MNFQVFSLIFFNFVYYCSC.

Post-translationally, contains 3 disulfide bonds. Expressed by the venom gland.

It localises to the secreted. The protein is Venom protein 54.1 of Lychas mucronatus (Chinese swimming scorpion).